Consider the following 451-residue polypeptide: SH2 domain-containing protein 7 (451 aa).

One can recognise an SH2 domain in the interval 51–142; that stretch reads WFHGFITRKQ…PFKEMLTAAC (92 aa). 3 disordered regions span residues 180 to 232, 256 to 321, and 408 to 436; these read KAAS…SLLE, LGTE…SDAM, and GTPE…THKP. Residues 221-232 show a composition bias toward low complexity; the sequence is SPLPEKSSSLLE. Basic and acidic residues predominate over residues 279–291; it reads EAQRRLSDGEQNR. A compositionally biased stretch (polar residues) spans 306-316; the sequence is QGPTESPTSWG. Residues 426 to 436 show a composition bias toward basic and acidic residues; that stretch reads KSKETGRTHKP.

The chain is SH2 domain-containing protein 7 (SH2D7) from Homo sapiens (Human).